The chain runs to 144 residues: Protein BUD31 homolog (144 aa).

The Nuclear localization signal motif lies at 2–10 (PKVRRSRKP).

This sequence belongs to the BUD31 (G10) family.

It is found in the nucleus. The sequence is that of Protein BUD31 homolog from Branchiostoma belcheri (Amphioxus).